The sequence spans 311 residues: Malate dehydrogenase (311 aa).

NAD(+) contacts are provided by residues 7 to 13 and D34; that span reads GAAGGIG. Substrate-binding residues include R81 and R87. Residues N94 and 117 to 119 contribute to the NAD(+) site; that span reads ITN. 2 residues coordinate substrate: N119 and R153. The Proton acceptor role is filled by H177. NAD(+) is bound at residue M227.

The protein belongs to the LDH/MDH superfamily. MDH type 1 family. Homodimer.

The enzyme catalyses (S)-malate + NAD(+) = oxaloacetate + NADH + H(+). Its function is as follows. Catalyzes the reversible oxidation of malate to oxaloacetate. In Colwellia psychrerythraea (strain 34H / ATCC BAA-681) (Vibrio psychroerythus), this protein is Malate dehydrogenase.